A 255-amino-acid chain; its full sequence is Ras-like protein family member 12 (255 aa).

GTP is bound by residues 30–37 (GAMGSGKS), 77–81 (DTADQ), and 137–140 (NKVD).

This sequence belongs to the small GTPase superfamily. Ras family.

It carries out the reaction GTP + H2O = GDP + phosphate + H(+). This chain is Ras-like protein family member 12 (RASL12), found in Danio rerio (Zebrafish).